A 525-amino-acid polypeptide reads, in one-letter code: MSFVIAAPEFLTAAAMDLASIGSTVSAASAAASAPTVAILAAGADEVSIAVAALFGMHGQAYQALSVQASAFHQQFVQALTAGAYSYASAEAAAVTPLQQLVDVINAPFRSALGRPLIGNGANGKPGTGQDGGAGGLLYGSGGNGGSGLAGSGQKGGNGGAAGLFGNGGAGGAGASNQAGNGGAGGNGGAGGLIWGTAGTGGNGGFTTFLDAAGGAGGAGGAGGLFGAGGAGGVGGAALGGGAQAAGGNGGAGGVGGLFGAGGAGGAGGFSDTGGTGGAGGAGGLFGPGGGSGGVGGFGDTGGTGGDGGSGGLFGVGGAGGHGGFGSAAGGDGGAGGAGGTVFGSGGAGGAGGVATVAGHGGHGGNAGLLYGTGGAGGAGGFGGFGGDGGDGGIGGLVGSGGAGGSGGTGTLSGGRGGAGGNAGTFYGSGGAGGAGGESDNGDGGNGGVGGKAGLVGEGGNGGDGGATIAGKGGSGGNGGNAWLTGQGGNGGNAAFGKAGTGSVGVGGAGGLLEGQNGENGLLPS.

The region spanning 1 to 93 (MSFVIAAPEF…AYSYASAEAA (93 aa)) is the PE domain. The interval 506-525 (VGGAGGLLEGQNGENGLLPS) is disordered. Positions 514-525 (EGQNGENGLLPS) are enriched in low complexity.

The protein belongs to the mycobacterial PE family. PGRS subfamily.

The protein localises to the secreted. The protein resides in the cell surface. It is found in the host cytoplasm. Its subcellular location is the host cytosol. Functionally, contributes to evasion of both innate and adaptive immunity. Inhibits autophagy in infected host phagocytes and inhibits major histocompatibility complex (MHC) class II antigen presentation by mycobacteria-infected dendritic cells. Has an important role in the growth and survival of M.tuberculosis, particularly during intracellular growth and in the later chronic phase of infection. The protein is PE-PGRS family protein PE_PGRS47 of Mycobacterium tuberculosis (strain ATCC 25618 / H37Rv).